The following is a 135-amino-acid chain: Large ribosomal subunit protein uL18 (135 aa).

The tract at residues 1–23 (MSQTANQKAKRIPLGKDASTKRR) is disordered.

The protein belongs to the universal ribosomal protein uL18 family. In terms of assembly, part of the 50S ribosomal subunit; part of the 5S rRNA/L5/L18/L25 subcomplex. Contacts the 5S and 23S rRNAs.

In terms of biological role, this is one of the proteins that bind and probably mediate the attachment of the 5S RNA into the large ribosomal subunit, where it forms part of the central protuberance. The chain is Large ribosomal subunit protein uL18 from Rhodococcus jostii (strain RHA1).